Consider the following 527-residue polypeptide: Monooxygenase aurF (527 aa).

An N-terminal signal peptide occupies residues 1 to 19 (MPNPTVAIVGLGALGLVTL). Asparagine 59 is a glycosylation site (N-linked (GlcNAc...) asparagine).

The protein belongs to the FMO family. As to quaternary structure, might be part of an extracellular enzyme complex composed of GIP1, aurF, aurO and aurS. FAD is required as a cofactor.

It is found in the secreted. The protein localises to the extracellular space. It participates in pigment biosynthesis. Functionally, monooxygenase; part of the gene cluster that mediates the biosynthesis of aurofusarin, a red mycelium pigment which is acting as a mycotoxin. The first step is performed by the polyketide synthase which condenses one acetyl-CoA and 6 malonyl-CoA units to form the first intermediate, the cyclic heptaketide and yellow pigment YWA1. The C2 hydroxyl group in the pyrone ring of YWA1 is probably formed during ring closure by an aldol-type cyclization reaction. The dehydratase aurZ then acts as the first tailoring enzyme in the aurofusarin biosynthetic pathway by converting YWA1 to nor-rubrofusarin. Nor-rubrofusarin is then methylated to rubrofusarin by the O-methyltransferase aurJ. Rubrofusarin is then transported across the plasma membrane by the rubrofusarin-specific pump aurT for further enzymatic processing by the extracellular complex composed of GIP1, aurF, aurO and aurS to yield aurofusarin. This chain is Monooxygenase aurF, found in Gibberella zeae (strain ATCC MYA-4620 / CBS 123657 / FGSC 9075 / NRRL 31084 / PH-1) (Wheat head blight fungus).